The chain runs to 527 residues: Pentatricopeptide repeat-containing protein At4g25270, chloroplastic (527 aa).

A chloroplast-targeting transit peptide spans 1-47 (MVSIVVHKPSFSYPSVSSSSMKKKPRHHQQLKQHRQNQYNNNGFTSL). The tract at residues 12-44 (SYPSVSSSSMKKKPRHHQQLKQHRQNQYNNNGF) is disordered. Residues 21–35 (MKKKPRHHQQLKQHR) show a composition bias toward basic residues. 10 PPR repeats span residues 126 to 156 (NLGI…MSKR), 159 to 193 (SPFA…GVKP), 194 to 228 (DRFT…GFGY), 229 to 259 (DVYV…IPHK), 260 to 294 (DYVS…GIEP), 295 to 326 (DKVA…GMEW), 327 to 361 (ELSV…DTVS), 367 to 389 (SAHS…NAKP), 390 to 425 (DGIT…GIDP), and 426 to 457 (KMEH…MGLE). A type E motif; degenerate region spans residues 462–527 (VWGALLYACY…QMMVDRGLET (66 aa)).

This sequence belongs to the PPR family. PCMP-E subfamily.

The protein localises to the plastid. Its subcellular location is the chloroplast. In Arabidopsis thaliana (Mouse-ear cress), this protein is Pentatricopeptide repeat-containing protein At4g25270, chloroplastic (PCMP-E53).